A 120-amino-acid polypeptide reads, in one-letter code: Flagellar protein FliT (120 aa).

Positions 1 to 50 (MERHQHLLSEYQQILTLSEQMLVLATEGNWDALVDLEMTYLKAVESTANI) are required for homodimerization. The tract at residues 60–98 (LQDLLREKLRAILDNEIEIKRLLQLRLDRLSDLVGQSTK) is fliD binding.

The protein belongs to the FliT family. As to quaternary structure, homodimer. Interacts with FliD and FlhC.

Its subcellular location is the cytoplasm. The protein resides in the cytosol. In terms of biological role, dual-function protein that regulates the transcription of class 2 flagellar operons and that also acts as an export chaperone for the filament-capping protein FliD. As a transcriptional regulator, acts as an anti-FlhDC factor; it directly binds FlhC, thus inhibiting the binding of the FlhC/FlhD complex to class 2 promoters, resulting in decreased expression of class 2 flagellar operons. As a chaperone, effects FliD transition to the membrane by preventing its premature polymerization, and by directing it to the export apparatus. The polypeptide is Flagellar protein FliT (Yersinia enterocolitica serotype O:8 / biotype 1B (strain NCTC 13174 / 8081)).